The chain runs to 776 residues: A-type ATP synthase subunit A (776 aa).

It belongs to the ATPase alpha/beta chains family. Has multiple subunits with at least A(3), B(3), C, D, E, F, H, I and proteolipid K(x). This protein undergoes a protein self splicing that involves a post-translational excision of the VDE intervening region (intein) followed by peptide ligation.

It is found in the cell membrane. The catalysed reaction is ATP + H2O + 4 H(+)(in) = ADP + phosphate + 5 H(+)(out). Functionally, component of the A-type ATP synthase that produces ATP from ADP in the presence of a proton gradient across the membrane. The A chain is the catalytic subunit. In Thermoplasma volcanium (strain ATCC 51530 / DSM 4299 / JCM 9571 / NBRC 15438 / GSS1), this protein is A-type ATP synthase subunit A.